We begin with the raw amino-acid sequence, 98 residues long: uncharacterized protein (98 aa).

The 69-residue stretch at 30-98 folds into the MOSC domain; sequence KKVVPSVKIH…RRKFCRVRLE (69 aa).

This is an uncharacterized protein from Haemophilus influenzae (strain ATCC 51907 / DSM 11121 / KW20 / Rd).